Consider the following 573-residue polypeptide: 60 kDa heat shock protein, mitochondrial (573 aa).

A mitochondrion-targeting transit peptide spans 1 to 26; it reads MLRLPAVLRQIRPVSRALAPHLTRAY. ATP contacts are provided by residues Lys75 and 111–115; that span reads DGTTT. Tyr227 is modified (phosphotyrosine). Positions 440 and 520 each coordinate ATP.

Its subcellular location is the mitochondrion matrix. The enzyme catalyses ATP + H2O + a folded polypeptide = ADP + phosphate + an unfolded polypeptide.. Functionally, chaperonin implicated in mitochondrial protein import and macromolecular assembly. Together with Hsp10, facilitates the correct folding of imported proteins. May also prevent misfolding and promote the refolding and proper assembly of unfolded polypeptides generated under stress conditions in the mitochondrial matrix. The functional units of these chaperonins consist of heptameric rings of the large subunit Hsp60, which function as a back-to-back double ring. In a cyclic reaction, Hsp60 ring complexes bind one unfolded substrate protein per ring, followed by the binding of ATP and association with 2 heptameric rings of the co-chaperonin Hsp10. This leads to sequestration of the substrate protein in the inner cavity of Hsp60 where, for a certain period of time, it can fold undisturbed by other cell components. Synchronous hydrolysis of ATP in all Hsp60 subunits results in the dissociation of the chaperonin rings and the release of ADP and the folded substrate protein. This chain is 60 kDa heat shock protein, mitochondrial, found in Gallus gallus (Chicken).